We begin with the raw amino-acid sequence, 417 residues long: Glutamyl-tRNA reductase (417 aa).

Residues 48 to 51 (TCNR), Ser-100, 105 to 107 (EDQ), and Gln-111 contribute to the substrate site. Cys-49 acts as the Nucleophile in catalysis. 180-185 (GAGETG) is a binding site for NADP(+).

It belongs to the glutamyl-tRNA reductase family. Homodimer.

It catalyses the reaction (S)-4-amino-5-oxopentanoate + tRNA(Glu) + NADP(+) = L-glutamyl-tRNA(Glu) + NADPH + H(+). Its pathway is porphyrin-containing compound metabolism; protoporphyrin-IX biosynthesis; 5-aminolevulinate from L-glutamyl-tRNA(Glu): step 1/2. Its function is as follows. Catalyzes the NADPH-dependent reduction of glutamyl-tRNA(Glu) to glutamate 1-semialdehyde (GSA). This chain is Glutamyl-tRNA reductase, found in Methanothrix thermoacetophila (strain DSM 6194 / JCM 14653 / NBRC 101360 / PT) (Methanosaeta thermophila).